Reading from the N-terminus, the 216-residue chain is Probable succinyl-CoA:3-ketoacid coenzyme A transferase subunit B (216 aa).

Glu-47 is an active-site residue.

This sequence belongs to the 3-oxoacid CoA-transferase subunit B family. As to quaternary structure, heterodimer of a subunit A and a subunit B.

It carries out the reaction a 3-oxo acid + succinyl-CoA = a 3-oxoacyl-CoA + succinate. This chain is Probable succinyl-CoA:3-ketoacid coenzyme A transferase subunit B (scoB), found in Bacillus subtilis (strain 168).